Consider the following 476-residue polypeptide: Probable cytosolic Fe-S cluster assembly factor GJ13047 (476 aa).

Positions 23, 68, 71, 74, 187, 243, 395, and 399 each coordinate [4Fe-4S] cluster.

Belongs to the NARF family.

Its function is as follows. Component of the cytosolic iron-sulfur (Fe/S) protein assembly machinery. Required for maturation of extramitochondrial Fe/S proteins. In Drosophila virilis (Fruit fly), this protein is Probable cytosolic Fe-S cluster assembly factor GJ13047.